A 440-amino-acid chain; its full sequence is Chaperone SurA (440 aa).

A signal peptide spans M1–A25. PpiC domains lie at S182–E283 and I294–E392.

It localises to the periplasm. It carries out the reaction [protein]-peptidylproline (omega=180) = [protein]-peptidylproline (omega=0). Chaperone involved in the correct folding and assembly of outer membrane proteins. Recognizes specific patterns of aromatic residues and the orientation of their side chains, which are found more frequently in integral outer membrane proteins. May act in both early periplasmic and late outer membrane-associated steps of protein maturation. The polypeptide is Chaperone SurA (Nitrosospira multiformis (strain ATCC 25196 / NCIMB 11849 / C 71)).